The sequence spans 35 residues: Photosystem II reaction center protein T (35 aa).

A helical transmembrane segment spans residues 3 to 23 (ALVYTFLLVSTLGIIFFAIFF).

It belongs to the PsbT family. PSII is composed of 1 copy each of membrane proteins PsbA, PsbB, PsbC, PsbD, PsbE, PsbF, PsbH, PsbI, PsbJ, PsbK, PsbL, PsbM, PsbT, PsbY, PsbZ, Psb30/Ycf12, at least 3 peripheral proteins of the oxygen-evolving complex and a large number of cofactors. It forms dimeric complexes.

It is found in the plastid. Its subcellular location is the chloroplast thylakoid membrane. In terms of biological role, found at the monomer-monomer interface of the photosystem II (PS II) dimer, plays a role in assembly and dimerization of PSII. PSII is a light-driven water plastoquinone oxidoreductase, using light energy to abstract electrons from H(2)O, generating a proton gradient subsequently used for ATP formation. In Gossypium barbadense (Sea Island cotton), this protein is Photosystem II reaction center protein T.